A 391-amino-acid chain; its full sequence is tRNA-specific 2-thiouridylase MnmA (391 aa).

Residues 20–27 and Leu-46 each bind ATP; that span reads AMSGGVDS. Cys-114 functions as the Nucleophile in the catalytic mechanism. Cys-114 and Cys-210 are oxidised to a cystine. ATP is bound at residue Gly-138. The segment at 160-162 is interaction with tRNA; it reads RDQ. The active-site Cysteine persulfide intermediate is the Cys-210.

This sequence belongs to the MnmA/TRMU family.

Its subcellular location is the cytoplasm. It catalyses the reaction S-sulfanyl-L-cysteinyl-[protein] + uridine(34) in tRNA + AH2 + ATP = 2-thiouridine(34) in tRNA + L-cysteinyl-[protein] + A + AMP + diphosphate + H(+). In terms of biological role, catalyzes the 2-thiolation of uridine at the wobble position (U34) of tRNA, leading to the formation of s(2)U34. This Bartonella bacilliformis (strain ATCC 35685 / KC583 / Herrer 020/F12,63) protein is tRNA-specific 2-thiouridylase MnmA.